Here is a 339-residue protein sequence, read N- to C-terminus: Fructose-1,6-bisphosphatase class 1 (339 aa).

Positions 101, 120, 122, and 123 each coordinate Mg(2+). Substrate is bound by residues 123 to 126 (DGSS), N215, and K281. E287 contacts Mg(2+).

The protein belongs to the FBPase class 1 family. Homotetramer. Mg(2+) is required as a cofactor.

The protein resides in the cytoplasm. The catalysed reaction is beta-D-fructose 1,6-bisphosphate + H2O = beta-D-fructose 6-phosphate + phosphate. It functions in the pathway carbohydrate biosynthesis; gluconeogenesis. The polypeptide is Fructose-1,6-bisphosphatase class 1 (Polynucleobacter necessarius subsp. necessarius (strain STIR1)).